The primary structure comprises 304 residues: Non-specific ribonucleoside hydrolase RihC (304 aa).

Residue H233 is part of the active site.

This sequence belongs to the IUNH family. RihC subfamily.

Functionally, hydrolyzes both purine and pyrimidine ribonucleosides with a broad-substrate specificity. In Escherichia coli O7:K1 (strain IAI39 / ExPEC), this protein is Non-specific ribonucleoside hydrolase RihC.